The following is a 79-amino-acid chain: Mipartoxin-3 (79 aa).

The N-terminal stretch at 1–21 (MKTLLLTLVVVTIVCLDLGNS) is a signal peptide. Intrachain disulfides connect C24/C41, C34/C59, C63/C71, and C72/C77.

It belongs to the three-finger toxin family. Short-chain subfamily. Expressed by the venom gland.

Its subcellular location is the secreted. Its function is as follows. Snake venom neurotoxin that blocks neuromuscular transmission, presenting a postsynaptic action through the nicotinic acetylcholine receptor (nAChR). Has no cytotoxic activity. In Micrurus mipartitus (Red-tailed coral snake), this protein is Mipartoxin-3.